We begin with the raw amino-acid sequence, 226 residues long: Protein BASIC PENTACYSTEINE7 (226 aa).

Residues 42–116 (IDLSQEPPAE…PSIPETKREK (75 aa)) are disordered. Basic and acidic residues predominate over residues 66-76 (RDSRNDTETVK). Positions 88–105 (LKPKPQRKKRSVSNKSKK) are enriched in basic residues.

It belongs to the BBR/BPC family. Expressed in seedlings, leaves and pistils. Detected in anthers, in pollen grains, in young rosette, in leaf vasculature, in the lateral and primary roots, in embryo sac, and in the whole ovule.

It localises to the nucleus. Transcriptional regulator that specifically binds to GA-rich elements (GAGA-repeats) present in regulatory sequences of genes involved in developmental processes. The protein is Protein BASIC PENTACYSTEINE7 (BPC7) of Arabidopsis thaliana (Mouse-ear cress).